Here is a 246-residue protein sequence, read N- to C-terminus: D-erythrulose reductase (246 aa).

Residue 13–41 participates in NADP(+) binding; it reads LVTGAGKGIGRAVAVALCKAGARVTALSR. A substrate-binding site is contributed by Ser-138. The active-site Proton acceptor is the Tyr-151. Position 155 (Lys-155) interacts with NADP(+).

It belongs to the short-chain dehydrogenases/reductases (SDR) family. In terms of assembly, homotetramer. The N-terminus is blocked. In terms of tissue distribution, highly expressed in kidney, and also found in high amounts in liver and testis. Low expression seen in all other tissues tested.

It is found in the cytoplasm. It carries out the reaction D-threitol + NADP(+) = D-erythrulose + NADPH + H(+). It catalyses the reaction xylitol + NADP(+) = L-xylulose + NADPH + H(+). Its function is as follows. Catalyzes the reduction of D-erythrulose to D-threitol with the concomitant oxidation of NAD(P)H to NAD(P)(+). NADH is less effective than NADPH. May also catalyze the reduction of L-xylulose. The polypeptide is D-erythrulose reductase (DER) (Gallus gallus (Chicken)).